The following is a 225-amino-acid chain: Uridylate kinase (225 aa).

9–10 is a binding site for ATP; that stretch reads GS. Position 43 (Gly43) interacts with UMP. Residues Gly44 and Arg48 each coordinate ATP. UMP contacts are provided by residues Asp65 and 113–119; that span reads TEPAHST. Residues Thr139, Tyr145, and Asp148 each coordinate ATP.

It belongs to the UMP kinase family. In terms of assembly, homohexamer.

Its subcellular location is the cytoplasm. It carries out the reaction UMP + ATP = UDP + ADP. Its pathway is pyrimidine metabolism; CTP biosynthesis via de novo pathway; UDP from UMP (UMPK route): step 1/1. With respect to regulation, inhibited by UTP. Its function is as follows. Catalyzes the reversible phosphorylation of UMP to UDP. This chain is Uridylate kinase, found in Methanobrevibacter smithii (strain ATCC 35061 / DSM 861 / OCM 144 / PS).